The chain runs to 290 residues: MSWLDKLLPPKIKQTDPKSRKGIPEGLWVKCPSCEAVLYRNDVDANLHVCPKCDHHMRIGARERLDGLLDPEGRYEIGQEIVPVDTLKFKDSRKYPDRLKEAMDETGETDAMVVMGGAIHTLPVVAACFEFSFMGGSMGSVVGERFARGAQNALEQHVPFICFTASGGARMQESLLSLMQMAKTTAMLTKLAEAKLPFISVLTDPTMGGVSASFAFLGDVVIAEPKALIGFAGPRVIEQTVREKLPEGFQRAEFLLKTGAIDMIVDRRKMRDEIAQLLALLQRQPADALA.

The CoA carboxyltransferase N-terminal domain occupies 27 to 290 (LWVKCPSCEA…LQRQPADALA (264 aa)). 4 residues coordinate Zn(2+): cysteine 31, cysteine 34, cysteine 50, and cysteine 53. A C4-type zinc finger spans residues 31 to 53 (CPSCEAVLYRNDVDANLHVCPKC).

Belongs to the AccD/PCCB family. Acetyl-CoA carboxylase is a heterohexamer composed of biotin carboxyl carrier protein (AccB), biotin carboxylase (AccC) and two subunits each of ACCase subunit alpha (AccA) and ACCase subunit beta (AccD). Zn(2+) is required as a cofactor.

Its subcellular location is the cytoplasm. The enzyme catalyses N(6)-carboxybiotinyl-L-lysyl-[protein] + acetyl-CoA = N(6)-biotinyl-L-lysyl-[protein] + malonyl-CoA. It participates in lipid metabolism; malonyl-CoA biosynthesis; malonyl-CoA from acetyl-CoA: step 1/1. Component of the acetyl coenzyme A carboxylase (ACC) complex. Biotin carboxylase (BC) catalyzes the carboxylation of biotin on its carrier protein (BCCP) and then the CO(2) group is transferred by the transcarboxylase to acetyl-CoA to form malonyl-CoA. This chain is Acetyl-coenzyme A carboxylase carboxyl transferase subunit beta, found in Burkholderia cenocepacia (strain ATCC BAA-245 / DSM 16553 / LMG 16656 / NCTC 13227 / J2315 / CF5610) (Burkholderia cepacia (strain J2315)).